Consider the following 1687-residue polypeptide: Gag-Pol polyprotein (1687 aa).

Glycine 2 is lipidated: N-myristoyl glycine; by host. Disordered stretches follow at residues 106-197 (SSPE…VILP) and 420-490 (HKRE…LDKD). The PTAP/PSAP motif motif lies at 108-111 (PENT). Positions 139-157 (EPPPYPAALPPPLAPPAVG) are enriched in pro residues. Positions 140–143 (PPPY) match the PPXY motif motif. Residues 408–455 (LQDLVREAEKVYHKRETEEERQEREKKEAEERERRRDRRQEKNLTRIL) are a coiled coil. Composition is skewed to basic and acidic residues over residues 420-451 (HKRETEEERQEREKKEAEERERRRDRRQEKNL) and 479-490 (TPRDGRPPLDKD). The segment at 490–507 (DQCAYCKEKGHWARECPQ) adopts a CCHC-type zinc-finger fold. The Peptidase A2 domain maps to 544 to 614 (IEFLVDTGAE…CPAPLLGRDL (71 aa)). Aspartate 549 serves as the catalytic Protease; shared with dimeric partner. In terms of domain architecture, Reverse transcriptase spans 721 to 912 (LDLGVLVPCQ…KEVTYLGYLL (192 aa)). Residues aspartate 789, aspartate 863, aspartate 864, aspartate 1180, glutamate 1200, aspartate 1221, and aspartate 1291 each coordinate Mg(2+). The RNase H type-1 domain occupies 1153–1299 (LPGVPAWYTD…ADEAAKQAAL (147 aa)). The HHCC-type zinc finger occupies 1339-1377 (HQLTHLGPEKLLQLVNRTSLLIPNLQSAVREVTSQCQAC). The Integrase catalytic domain maps to 1394–1552 (RGDRPGVYWE…TPYEILYGGP (159 aa)). Aspartate 1405 and aspartate 1464 together coordinate Mg(2+).

The protein belongs to the retroviral Pol polyprotein family. As to quaternary structure, homohexamer; further associates as homomultimer. The virus core is composed of a lattice formed from hexagonal rings, each containing six capsid monomers. In terms of assembly, interacts (via PPXY motif) with host NEDD4. Interacts (via PSAP motif) with host TSG101. The reverse transcriptase is a monomer (Potential). Interacts (via RNase domains) with host release factor ETF1; this interaction is essential for translational readthrough of amber codon between viral gag and pol genes, as well as for viral replication. As to quaternary structure, homodimer. The cofactor is Mg(2+). Post-translationally, specific enzymatic cleavages by the viral protease yield mature proteins. The protease is released by autocatalytic cleavage. The polyprotein is cleaved during and after budding, this process is termed maturation. Phosphorylated on serine residues.

Its subcellular location is the virion. It localises to the host cell membrane. The protein localises to the host late endosome membrane. It is found in the host endosome. The protein resides in the host multivesicular body. Its subcellular location is the host cytoplasm. It carries out the reaction DNA(n) + a 2'-deoxyribonucleoside 5'-triphosphate = DNA(n+1) + diphosphate. It catalyses the reaction Endonucleolytic cleavage to 5'-phosphomonoester.. Most efficiently inhibited by Amprenavir, which is able to block Gag-Pol processing in infected cells. In terms of biological role, plays a role in budding and is processed by the viral protease during virion maturation outside the cell. During budding, it recruits, in a PPXY-dependent or independent manner, Nedd4-like ubiquitin ligases that conjugate ubiquitin molecules to Gag-Pol, or to Gag-Pol binding host factors. Interaction with HECT ubiquitin ligases probably links the viral protein to the host ESCRT pathway and facilitates release. Targets Gag and gag-pol polyproteins to the plasma membrane via a multipartite membrane binding signal, that includes its myristoylated N-terminus. Also mediates nuclear localization of the pre-integration complex. Functionally, constituent of the pre-integration complex (PIC) which tethers the latter to mitotic chromosomes. This allows the integration of the viral genome into the host DNA. Its function is as follows. Forms the spherical core of the virion that encapsulates the genomic RNA-nucleocapsid complex. In terms of biological role, involved in the packaging and encapsidation of two copies of the genome. Binds with high affinity to conserved UCUG elements within the packaging signal, located near the 5'-end of the genome. This binding is dependent on genome dimerization. Acts as a nucleic acid chaperone which is involved in rearrangement of nucleic acid secondary structures during gRNA retrotranscription. The aspartyl protease mediates proteolytic cleavages of Gag and Gag-Pol polyproteins during or shortly after the release of the virion from the plasma membrane. Cleavages take place as an ordered, step-wise cascade to yield mature proteins. This process is called maturation. Displays maximal activity during the budding process just prior to particle release from the cell. Functionally, RT is a multifunctional enzyme that converts the viral dimeric RNA genome into dsDNA in the cytoplasm, shortly after virus entry into the cell. This enzyme displays a DNA polymerase activity that can copy either DNA or RNA templates, and a ribonuclease H (RNase H) activity that cleaves the RNA strand of RNA-DNA heteroduplexes in a partially processive 3' to 5' endonucleasic mode. Conversion of viral genomic RNA into dsDNA requires many steps. A tRNA binds to the primer-binding site (PBS) situated at the 5' end of the viral RNA. RT uses the 3' end of the tRNA primer to perform a short round of RNA-dependent minus-strand DNA synthesis. The reading proceeds through the U5 region and ends after the repeated (R) region which is present at both ends of viral RNA. The portion of the RNA-DNA heteroduplex is digested by the RNase H, resulting in a ssDNA product attached to the tRNA primer. This ssDNA/tRNA hybridizes with the identical R region situated at the 3' end of viral RNA. This template exchange, known as minus-strand DNA strong stop transfer, can be either intra- or intermolecular. RT uses the 3' end of this newly synthesized short ssDNA to perform the RNA-dependent minus-strand DNA synthesis of the whole template. RNase H digests the RNA template except for a polypurine tract (PPT) situated at the 5' end of the genome. It is not clear if both polymerase and RNase H activities are simultaneous. RNase H probably can proceed both in a polymerase-dependent (RNA cut into small fragments by the same RT performing DNA synthesis) and a polymerase-independent mode (cleavage of remaining RNA fragments by free RTs). Secondly, RT performs DNA-directed plus-strand DNA synthesis using the PPT that has not been removed by RNase H as primers. PPT and tRNA primers are then removed by RNase H. The 3' and 5' ssDNA PBS regions hybridize to form a circular dsDNA intermediate. Strand displacement synthesis by RT to the PBS and PPT ends produces a blunt ended, linear dsDNA copy of the viral genome that includes long terminal repeats (LTRs) at both ends. Its function is as follows. Catalyzes viral DNA integration into the host chromosome, by performing a series of DNA cutting and joining reactions. This enzyme activity takes place after virion entry into a cell and reverse transcription of the RNA genome in dsDNA. The first step in the integration process is 3' processing. This step requires a complex comprising the viral genome, matrix protein and integrase. This complex is called the pre-integration complex (PIC). The integrase protein removes 2 nucleotides from each 3' end of the viral DNA, leaving recessed CA OH's at the 3' ends. In the second step that requires cell division, the PIC enters cell nucleus. In the third step, termed strand transfer, the integrase protein joins the previously processed 3' ends to the 5' ends of strands of target cellular DNA at the site of integration. The last step is viral DNA integration into host chromosome. The protein is Gag-Pol polyprotein (pol) of Woolly monkey sarcoma virus (WMSV).